The primary structure comprises 652 residues: UvrABC system protein C (652 aa).

A GIY-YIG domain is found at 37-116; sequence KSSGCYLFKD…IKTNKPYFNI (80 aa). A UVR domain is found at 226-261; it reads DDLEIFLQKKMLQFSNDLDYENAAKIRDQISGLKLL.

It belongs to the UvrC family. In terms of assembly, interacts with UvrB in an incision complex.

It is found in the cytoplasm. Functionally, the UvrABC repair system catalyzes the recognition and processing of DNA lesions. UvrC both incises the 5' and 3' sides of the lesion. The N-terminal half is responsible for the 3' incision and the C-terminal half is responsible for the 5' incision. This Prochlorococcus marinus (strain MIT 9312) protein is UvrABC system protein C.